The chain runs to 166 residues: MASGVAVSDGVIKVFNDMKVRKSSTPEEVKKRKKAVLFCLSEDKKNIILEEGKEILVGDVGQTVDDPYTTFVKMLPDKDCRYALYDATYETKESKKEDLVFIFWAPENAPLKSKMIYASSKDAIKKKLTGIKHELQANCYEEVKDRCTLAEKLGGSAVISLEGKPL.

Position 2 is an N-acetylalanine (Ala-2). Ser-3 and Ser-8 each carry phosphoserine. One can recognise an ADF-H domain in the interval 4 to 153 (GVAVSDGVIK…KDRCTLAEKL (150 aa)). An N6-acetyllysine modification is found at Lys-13. Thr-25 bears the Phosphothreonine mark. A Nuclear localization signal motif is present at residues 30–34 (KKRKK). At Ser-41 the chain carries Phosphoserine. Thr-63 carries the phosphothreonine modification. Tyr-68 bears the Phosphotyrosine mark. Lys-73 carries the post-translational modification N6-acetyllysine. Tyr-82 is modified (phosphotyrosine). A Glycyl lysine isopeptide (Lys-Gly) (interchain with G-Cter in SUMO2) cross-link involves residue Lys-132. Phosphotyrosine is present on Tyr-140. Lys-144 is subject to N6-acetyllysine. Ser-156 is modified (phosphoserine).

Belongs to the actin-binding proteins ADF family. Can bind G- and F-actin in a 1:1 ratio of cofilin to actin. It is a major component of intranuclear and cytoplasmic actin rods. Interacts with the subcortical maternal complex (SCMC) via interaction with TLE6 and NLRP5. Interacts with C9orf72. Inactivated by phosphorylation on Ser-3. Phosphorylated on Ser-3 in resting cells. Dephosphorylated by PDXP/chronophin; this restores its activity in promoting actin filament depolymerization. The phosphorylation of Ser-24 may prevent recognition of the nuclear localization signal. Phosphorylated via a ARRB1-RAC1-LIMK1-PAK1 cascade upon active ligand stimulation of atypical chemokine receptor ACKR2. Widely distributed in various tissues. Not found in skeletal muscle.

It is found in the nucleus matrix. It localises to the cytoplasm. Its subcellular location is the cytoskeleton. The protein resides in the cell projection. The protein localises to the ruffle membrane. It is found in the lamellipodium membrane. It localises to the lamellipodium. Its subcellular location is the growth cone. The protein resides in the axon. Functionally, binds to F-actin and exhibits pH-sensitive F-actin depolymerizing activity. In conjunction with the subcortical maternal complex (SCMC), plays an essential role for zygotes to progress beyond the first embryonic cell divisions via regulation of actin dynamics. Required for the centralization of the mitotic spindle and symmetric division of zygotes. Plays a role in the regulation of cell morphology and cytoskeletal organization in epithelial cells. Required for the up-regulation of atypical chemokine receptor ACKR2 from endosomal compartment to cell membrane, increasing its efficiency in chemokine uptake and degradation. Required for neural tube morphogenesis and neural crest cell migration. In Mus musculus (Mouse), this protein is Cofilin-1 (Cfl1).